Consider the following 105-residue polypeptide: Large ribosomal subunit protein bL21 (105 aa).

It belongs to the bacterial ribosomal protein bL21 family. Part of the 50S ribosomal subunit. Contacts protein L20.

Its function is as follows. This protein binds to 23S rRNA in the presence of protein L20. In Bacteroides fragilis (strain YCH46), this protein is Large ribosomal subunit protein bL21.